Here is a 150-residue protein sequence, read N- to C-terminus: D-aminoacyl-tRNA deacylase (150 aa).

Positions 137 to 138 (GP) match the Gly-cisPro motif, important for rejection of L-amino acids motif.

It belongs to the DTD family. In terms of assembly, homodimer.

It localises to the cytoplasm. It catalyses the reaction glycyl-tRNA(Ala) + H2O = tRNA(Ala) + glycine + H(+). The enzyme catalyses a D-aminoacyl-tRNA + H2O = a tRNA + a D-alpha-amino acid + H(+). Functionally, an aminoacyl-tRNA editing enzyme that deacylates mischarged D-aminoacyl-tRNAs. Also deacylates mischarged glycyl-tRNA(Ala), protecting cells against glycine mischarging by AlaRS. Acts via tRNA-based rather than protein-based catalysis; rejects L-amino acids rather than detecting D-amino acids in the active site. By recycling D-aminoacyl-tRNA to D-amino acids and free tRNA molecules, this enzyme counteracts the toxicity associated with the formation of D-aminoacyl-tRNA entities in vivo and helps enforce protein L-homochirality. The chain is D-aminoacyl-tRNA deacylase from Listeria monocytogenes serotype 4b (strain CLIP80459).